Here is a 224-residue protein sequence, read N- to C-terminus: DNNVLLTGDVIHTDNQLSYESAAFVMQGDCNLVLYNEAGGFQSNTHGRGVDCTLRLNNRGQLEIHSANSNTPVWVYPRSVNTVRGNYAATLGPDQHVTIYGPAIWSTPAAANIPRVRNVLFSSQVMYDNAQLATRDYSLVMRDDCNLVLTKGSKTNIVWESGTSGRGQHCFMRLGHSGELDITDDRLNTVFVSNTVGQEGDYVLILQINGQAVVYGPAVWSTAA.

2 Bulb-type lectin domains span residues 2 to 111 and 117 to 222; these read NNVL…PAAA and RNVL…VWST. 2 cysteine pairs are disulfide-bonded: C30–C52 and C145–C170.

Heterotetramer of 2 domain 1 and 2 domain 2 chains arranged as a dimer of domain 1/domain 2 heterodimers.

Its function is as follows. Mannose-specific lectin. Has weak agglutinating activity towards trypsin-treated erythrocytes from rabbit but not from human. This is Mannose-specific lectin 3 from Crocus vernus (Dutch crocus).